The sequence spans 237 residues: Pyridoxal 5'-phosphate synthase subunit PdxS (237 aa).

Residue lysine 19 is the Schiff-base intermediate with D-ribose 5-phosphate of the active site. D-ribose 5-phosphate is bound at residue glycine 91. Arginine 103 is a binding site for D-glyceraldehyde 3-phosphate. D-ribose 5-phosphate is bound by residues glycine 157 and 178-179 (GS).

Belongs to the PdxS/SNZ family. In the presence of PdxT, forms a dodecamer of heterodimers.

The enzyme catalyses aldehydo-D-ribose 5-phosphate + D-glyceraldehyde 3-phosphate + L-glutamine = pyridoxal 5'-phosphate + L-glutamate + phosphate + 3 H2O + H(+). It functions in the pathway cofactor biosynthesis; pyridoxal 5'-phosphate biosynthesis. Functionally, catalyzes the formation of pyridoxal 5'-phosphate from ribose 5-phosphate (RBP), glyceraldehyde 3-phosphate (G3P) and ammonia. The ammonia is provided by the PdxT subunit. Can also use ribulose 5-phosphate and dihydroxyacetone phosphate as substrates, resulting from enzyme-catalyzed isomerization of RBP and G3P, respectively. The chain is Pyridoxal 5'-phosphate synthase subunit PdxS from Methanococcus vannielii.